A 263-amino-acid chain; its full sequence is Chymotrypsinogen 2 (263 aa).

The N-terminal stretch at Met1–Gly18 is a signal peptide. 5 cysteine pairs are disulfide-bonded: Cys19/Cys140, Cys60/Cys76, Cys154/Cys219, Cys186/Cys200, and Cys209/Cys238. Residues Ile34–Gln261 form the Peptidase S1 domain. Catalysis depends on His75, which acts as the Charge relay system. Ser93 is modified (phosphoserine). Residue Asp120 is the Charge relay system of the active site. Ser213 functions as the Charge relay system in the catalytic mechanism.

This sequence belongs to the peptidase S1 family.

Its subcellular location is the secreted. The protein resides in the extracellular space. It catalyses the reaction Preferential cleavage: Tyr-|-Xaa, Trp-|-Xaa, Phe-|-Xaa, Leu-|-Xaa.. The chain is Chymotrypsinogen 2 (CTRB1) from Canis lupus familiaris (Dog).